Here is a 367-residue protein sequence, read N- to C-terminus: Cyclin-D3-2 (367 aa).

Residues 324–335 (STTASVSSSSSS) are compositionally biased toward low complexity. The disordered stretch occupies residues 324–347 (STTASVSSSSSSPEPLLKRRRVQE).

Belongs to the cyclin family. Cyclin D subfamily. In terms of assembly, interacts with CDKA-1. As to expression, expressed in developing vegetative and floral primordia.

In terms of biological role, promotes divisions in the guard cells (GCs) after the guard mother cells (GMC) symmetric division when in the presence of CDKA-1. The polypeptide is Cyclin-D3-2 (CYCD3-2) (Arabidopsis thaliana (Mouse-ear cress)).